We begin with the raw amino-acid sequence, 231 residues long: MKPFRFKKFTVQQHKEVFRVGTDGVLLGALADVSDAKNILEVGTGTGLVALMTAQRNPTSNITAIDVNPVAAELAAKNFLESHFGHRMRAMHCDYKTFGTQKKFDLIISNPPYFETNPSEKDATARQQRELSFKTLISKTAEILATEGRFCVIIPFPAGPTFEKTCEENKLFLLRRITVYGNANVEPKRLILEFSSNKNISVSEEIFVTEKAPRVYSEQYLKATADFHEFE.

This sequence belongs to the methyltransferase superfamily. tRNA (adenine-N(6)-)-methyltransferase family.

It is found in the cytoplasm. The catalysed reaction is adenosine(37) in tRNA1(Val) + S-adenosyl-L-methionine = N(6)-methyladenosine(37) in tRNA1(Val) + S-adenosyl-L-homocysteine + H(+). Its function is as follows. Specifically methylates the adenine in position 37 of tRNA(1)(Val) (anticodon cmo5UAC). The sequence is that of tRNA1(Val) (adenine(37)-N6)-methyltransferase from Flavobacteriaceae bacterium (strain 3519-10).